A 343-amino-acid polypeptide reads, in one-letter code: MKTNAGRFFEDYRLGETIAHAVPRTVSGGERALYHALYPARHALSSSDEFARACGLPAAPVDELMAFHLVFGKTVPDISLNAVANLGYAEGRWLKPVFPGDTLRAESTVIGLKENSNGASGVVWVRTRGLNQQGEAVLSYVRWVMVRKRDTAAPAPAPTVPELAGSVAASDLVIPEGLSFTDYDLTLAGEPHRWGDYAVGEKIDHVDGVTVEESEHMLATRLWQNTAKVHFDATNRPDGRRLIYGGHVISLARTLSFNGLANAQMIVALNAGAHANPCFAGDTVRAWSEVLDKAETADPGVGALRLRLVAMKHGTEPFVTRSEDGKYLPGVLLDLDYWALVPR.

Residues 47 to 116 enclose the MaoC-like domain; it reads SDEFARACGL…STVIGLKENS (70 aa). Substrate contacts are provided by residues 60 to 63, 83 to 86, and 94 to 96; these read PVDE, VANL, and LKP.

The enzyme catalyses (2R,3S)-beta-methylmalyl-CoA = 2-methylfumaryl-CoA + H2O. In terms of biological role, involved in the ethylmalonyl-CoA pathway for acetate assimilation. Catalyzes the reversible hydration of mesaconyl-CoA (2-methylfumaryl-CoA) to yield beta-methylmalyl-CoA ((2R,3S)-beta-methylmalyl-CoA). The chain is Mesaconyl-CoA hydratase (mch) from Cereibacter sphaeroides (strain ATCC 17023 / DSM 158 / JCM 6121 / CCUG 31486 / LMG 2827 / NBRC 12203 / NCIMB 8253 / ATH 2.4.1.) (Rhodobacter sphaeroides).